The sequence spans 240 residues: Acetoacetyl-CoA reductase (240 aa).

NADP(+)-binding positions include 18–20 (RGI) and 82–86 (NAGIT). Substrate-binding positions include Ser134 and 141–144 (NVGQ). Tyr147 functions as the Proton acceptor in the catalytic mechanism. 177-180 (PGFI) serves as a coordination point for NADP(+). 178 to 179 (GF) contacts substrate.

It belongs to the short-chain dehydrogenases/reductases (SDR) family.

The catalysed reaction is a (3R)-3-hydroxyacyl-CoA + NADP(+) = a 3-oxoacyl-CoA + NADPH + H(+). It participates in biopolymer metabolism; poly-(R)-3-hydroxybutanoate biosynthesis. In terms of biological role, catalyzes the reduction of acetoacetyl-CoA to (R)-3-hydroxybutyryl-CoA. When expressed in E.coli with Synechocystis PhaA, PhaC and PhaE confers the ability to synthesize up to 12% (w/w) poly(3-hydroxybutyrate) (PHB) depending on the carbon source. The chain is Acetoacetyl-CoA reductase from Synechocystis sp. (strain ATCC 27184 / PCC 6803 / Kazusa).